Here is a 318-residue protein sequence, read N- to C-terminus: L-carnitine dehydrogenase (318 aa).

14–19 (GSGVIG) lines the NAD(+) pocket.

This sequence belongs to the 3-hydroxyacyl-CoA dehydrogenase family. L-carnitine dehydrogenase subfamily. Homodimer.

It is found in the cytoplasm. The enzyme catalyses carnitine + NAD(+) = 3-dehydrocarnitine + NADH + H(+). The protein operates within amine and polyamine metabolism; carnitine metabolism. In terms of biological role, catalyzes the NAD(+)-dependent oxidation of L-carnitine to 3-dehydrocarnitine. The protein is L-carnitine dehydrogenase of Pseudomonas syringae pv. syringae (strain B728a).